The sequence spans 994 residues: Phosphoenolpyruvate carboxylase (994 aa).

Positions 1 to 66 (MKSSGSARAT…QGRTREDKDR (66 aa)) are disordered. Composition is skewed to low complexity over residues 14–25 (AVSSSSAPAHAE) and 41–54 (AAARPLAPTNAASA). Active-site residues include histidine 204 and lysine 646.

The protein belongs to the PEPCase type 1 family. The cofactor is Mg(2+).

The catalysed reaction is oxaloacetate + phosphate = phosphoenolpyruvate + hydrogencarbonate. Its function is as follows. Forms oxaloacetate, a four-carbon dicarboxylic acid source for the tricarboxylic acid cycle. The sequence is that of Phosphoenolpyruvate carboxylase from Burkholderia mallei (strain NCTC 10247).